The primary structure comprises 495 residues: Ribose import ATP-binding protein RbsA (495 aa).

ABC transporter domains follow at residues 7 to 242 (LEMR…VGRP) and 250 to 491 (ERDI…TGVN). 39–46 (GENGAGKS) lines the ATP pocket.

It belongs to the ABC transporter superfamily. Ribose importer (TC 3.A.1.2.1) family. The complex is composed of an ATP-binding protein (RbsA), two transmembrane proteins (RbsC) and a solute-binding protein (RbsB).

It localises to the cell inner membrane. The enzyme catalyses D-ribose(out) + ATP + H2O = D-ribose(in) + ADP + phosphate + H(+). Functionally, part of the ABC transporter complex RbsABC involved in ribose import. Responsible for energy coupling to the transport system. In Shigella dysenteriae serotype 1 (strain Sd197), this protein is Ribose import ATP-binding protein RbsA.